A 1017-amino-acid chain; its full sequence is NLR family CARD domain-containing protein 4 (1017 aa).

The CARD domain maps to 1–88 (MNFIKENSQV…PLFQELHGLS (88 aa)). Residues 95–298 (EEDLDDLAQE…QFGALIAEVG (204 aa)) form a nucleotide-binding domain (NBD) region. One can recognise an NACHT domain in the interval 163–476 (SPCIIEGESG…VTKGNGHLQK (314 aa)). ATP is bound at residue 169–176 (GESGKGKS). The interval 356–463 (SHTQTTLFCT…RLSSLLTSGE (108 aa)) is winged-helix domain (WHD). The residue at position 533 (Ser533) is a Phosphoserine. 12 LRR repeats span residues 578–598 (FFRGKSLYINSENIPDYLFDF), 649–672 (KQEFKTLDVTLRDFCKLSKKDIKY), 728–751 (VTNLQTLGVHDLQIQRLPGGLTDN), 755–778 (LKNLMKLILDNIQMNEEDALKLAE), 780–805 (LTNLKKMCLLRLTHLSDIGEGMDYIV), 817–840 (EIQLVSCCLSGNAVKTLAQNLHNL), 841–863 (ARLSILDLSENHLEKDGKEALQQ), 871–895 (LEQLTVLMLPWCGDVRVSLARLLEQ), 904–926 (KLGLKNWRLTDAEIRILGVFFEK), 929–956 (LENFQQLDLAGNCVSSDGWLAFMSGFEN), 958–978 (KELVFFDFSTKGLLPDASLVR), and 992–1014 (EVQLVGWQLDDDDVSVLKGAFKL).

Homooligomer; homooligomerizes following activation of Naip proteins by pathogenic proteins such as S.typhimurium (Salmonella) flagellin or PrgJ. Component of the NLRC4 inflammasome, at least composed of NLRC4, caspase-1 (CASP1) and some NAIP family member. Interacts with EIF2AK2/PKR. Phosphorylated at Ser-533 following infection of macrophages with S.typhimurium (Salmonella). Phosphorylation is essential for NLRC4 inflammasome function to promote caspase-1 activation and pyroptosis. PRKCD phosphorylates Ser-533 in vitro.

It localises to the cytoplasm. The protein resides in the cytosol. Functionally, key component of inflammasomes that indirectly senses specific proteins from pathogenic bacteria and fungi and responds by assembling an inflammasome complex that promotes caspase-1 activation, cytokine production and macrophage pyroptosis. The NLRC4 inflammasome is activated as part of the innate immune response to a range of intracellular bacteria. The polypeptide is NLR family CARD domain-containing protein 4 (NLRC4) (Bos taurus (Bovine)).